The chain runs to 484 residues: Crt homolog 2 (484 aa).

Residues Met1 to Thr57 lie on the Cytoplasmic side of the membrane. Residues Ala58 to Leu78 traverse the membrane as a helical segment. At Lys79–Gln94 the chain is on the vacuolar side. Residues Leu95–Thr115 form a helical membrane-spanning segment. Topologically, residues Asn116–Trp128 are cytoplasmic. The chain crosses the membrane as a helical span at residues Lys129–Ile149. At Lys150–Pro154 the chain is on the vacuolar side. The chain crosses the membrane as a helical span at residues Leu155 to Leu175. Topologically, residues Lys176–Arg178 are cytoplasmic. Residues Tyr179–Ile199 traverse the membrane as a helical segment. Topologically, residues Pro200–Asn210 are vacuolar. Asn206 carries N-linked (GlcNAc...) asparagine glycosylation. A helical membrane pass occupies residues Met211–Tyr231. The Cytoplasmic portion of the chain corresponds to Lys232–Val244. The chain crosses the membrane as a helical span at residues Trp245–Ile265. At Asn266–Trp328 the chain is on the vacuolar side. Asn302 carries an N-linked (GlcNAc...) asparagine glycan. The helical transmembrane segment at Val329–Leu349 threads the bilayer. Over Lys350 to Thr355 the chain is Cytoplasmic. A helical membrane pass occupies residues Val356–Met378. At Gly379–Ser382 the chain is on the vacuolar side. The helical transmembrane segment at Asn383–Tyr403 threads the bilayer. Topologically, residues Arg404 to Gln484 are cytoplasmic.

It belongs to the CRT-like transporter family.

Its subcellular location is the vacuole membrane. Nutrient transporter. Involved in maintaining the osmotic homeostasis of the digestive vacuole. The sequence is that of Crt homolog 2 (crtp2) from Dictyostelium discoideum (Social amoeba).